A 64-amino-acid polypeptide reads, in one-letter code: Large ribosomal subunit protein bL35 (64 aa).

The segment at 1 to 29 (MPKMKTHSGAKKRFKLTGSGKLRRQQANR) is disordered.

It belongs to the bacterial ribosomal protein bL35 family.

This Pseudarthrobacter chlorophenolicus (strain ATCC 700700 / DSM 12829 / CIP 107037 / JCM 12360 / KCTC 9906 / NCIMB 13794 / A6) (Arthrobacter chlorophenolicus) protein is Large ribosomal subunit protein bL35.